Consider the following 54-residue polypeptide: uncharacterized protein (54 aa).

A disordered region spans residues 34 to 54 (NNREKQKSGKLRELRRGFKTF).

This is an uncharacterized protein from Acidianus two-tailed virus (ATV).